The primary structure comprises 319 residues: Urease accessory protein UreD (319 aa).

Residues 254–273 form a disordered region; it reads PDPVGSPAARRESVPAKRAE. Positions 262–273 are enriched in basic and acidic residues; sequence ARRESVPAKRAE.

The protein belongs to the UreD family. In terms of assembly, ureD, UreF and UreG form a complex that acts as a GTP-hydrolysis-dependent molecular chaperone, activating the urease apoprotein by helping to assemble the nickel containing metallocenter of UreC. The UreE protein probably delivers the nickel.

The protein localises to the cytoplasm. Functionally, required for maturation of urease via the functional incorporation of the urease nickel metallocenter. The protein is Urease accessory protein UreD of Frankia casuarinae (strain DSM 45818 / CECT 9043 / HFP020203 / CcI3).